Consider the following 345-residue polypeptide: NADH-ubiquinone oxidoreductase chain 2 (345 aa).

10 helical membrane passes run 1–21 (MNPLINFILLSSMIAGTILTT), 26–46 (WVSAWLGLELNTLAIIPIISM), 60–80 (FLIQAASSALVLLSGIINAHL), 96–115 (IALTTALATKLGLAPIHFWL), 122–144 (VPILTALIIATWQKIAPMALLIM), 148–170 (LIPTPITLIMGLTSTIVGGLGGL), 201–223 (TLLNLILYIPMTSLTMLIMHLTM), 242–262 (SLFLLSLLSLGGLPPLSGFIP), 274–294 (NLTPMAFMMAITALLSLMFYL), and 323–343 (TSTLPLLSLISIFLLPITPTL).

This sequence belongs to the complex I subunit 2 family.

It is found in the mitochondrion inner membrane. The catalysed reaction is a ubiquinone + NADH + 5 H(+)(in) = a ubiquinol + NAD(+) + 4 H(+)(out). In terms of biological role, core subunit of the mitochondrial membrane respiratory chain NADH dehydrogenase (Complex I) that is believed to belong to the minimal assembly required for catalysis. Complex I functions in the transfer of electrons from NADH to the respiratory chain. The immediate electron acceptor for the enzyme is believed to be ubiquinone. In Varanus nebulosus (Clouded monitor), this protein is NADH-ubiquinone oxidoreductase chain 2 (MT-ND2).